Here is a 207-residue protein sequence, read N- to C-terminus: Large ribosomal subunit protein uL4 (207 aa).

Positions 62 to 85 (KKPFKQKGTGQARQGCRRAPQYPG) are disordered.

The protein belongs to the universal ribosomal protein uL4 family. In terms of assembly, part of the 50S ribosomal subunit.

Functionally, one of the primary rRNA binding proteins, this protein initially binds near the 5'-end of the 23S rRNA. It is important during the early stages of 50S assembly. It makes multiple contacts with different domains of the 23S rRNA in the assembled 50S subunit and ribosome. In terms of biological role, forms part of the polypeptide exit tunnel. The protein is Large ribosomal subunit protein uL4 of Geobacter sp. (strain M21).